We begin with the raw amino-acid sequence, 304 residues long: NADH-cytochrome b5 reductase 2 (304 aa).

Residues 9-29 traverse the membrane as a helical segment; it reads MLVALAVIGVTVLLFLIKALG. One can recognise an FAD-binding FR-type domain in the interval 43-155; that stretch reads NAKYPLPLIE…RGPNGLLVYK (113 aa). FAD is bound by residues 135 to 150 and 174 to 209; these read DSLK…GPNG and VAKH…KCSL.

Belongs to the flavoprotein pyridine nucleotide cytochrome reductase family. Requires FAD as cofactor.

It localises to the membrane. The catalysed reaction is 2 Fe(III)-[cytochrome b5] + NADH = 2 Fe(II)-[cytochrome b5] + NAD(+) + H(+). Its function is as follows. NADH-cytochrome b5 reductases are involved in desaturation and elongation of fatty acids, cholesterol biosynthesis and drug metabolism. This is NADH-cytochrome b5 reductase 2 (cyb5r2) from Xenopus tropicalis (Western clawed frog).